Here is a 209-residue protein sequence, read N- to C-terminus: Transcription antitermination protein NusB (209 aa).

The protein belongs to the NusB family.

Its function is as follows. Involved in transcription antitermination. Required for transcription of ribosomal RNA (rRNA) genes. Binds specifically to the boxA antiterminator sequence of the ribosomal RNA (rrn) operons. This Cyanothece sp. (strain PCC 7425 / ATCC 29141) protein is Transcription antitermination protein NusB.